The primary structure comprises 251 residues: Triosephosphate isomerase (251 aa).

9–11 (NWK) is a binding site for substrate. The active-site Electrophile is His95. The active-site Proton acceptor is the Glu167. Residues Gly173, Ser213, and 234-235 (GG) each bind substrate.

The protein belongs to the triosephosphate isomerase family. Homodimer.

It localises to the cytoplasm. The catalysed reaction is D-glyceraldehyde 3-phosphate = dihydroxyacetone phosphate. Its pathway is carbohydrate biosynthesis; gluconeogenesis. It functions in the pathway carbohydrate degradation; glycolysis; D-glyceraldehyde 3-phosphate from glycerone phosphate: step 1/1. Functionally, involved in the gluconeogenesis. Catalyzes stereospecifically the conversion of dihydroxyacetone phosphate (DHAP) to D-glyceraldehyde-3-phosphate (G3P). The sequence is that of Triosephosphate isomerase from Latilactobacillus sakei subsp. sakei (strain 23K) (Lactobacillus sakei subsp. sakei).